A 95-amino-acid chain; its full sequence is Aspartyl/glutamyl-tRNA(Asn/Gln) amidotransferase subunit C (95 aa).

Belongs to the GatC family. As to quaternary structure, heterotrimer of A, B and C subunits.

It carries out the reaction L-glutamyl-tRNA(Gln) + L-glutamine + ATP + H2O = L-glutaminyl-tRNA(Gln) + L-glutamate + ADP + phosphate + H(+). It catalyses the reaction L-aspartyl-tRNA(Asn) + L-glutamine + ATP + H2O = L-asparaginyl-tRNA(Asn) + L-glutamate + ADP + phosphate + 2 H(+). In terms of biological role, allows the formation of correctly charged Asn-tRNA(Asn) or Gln-tRNA(Gln) through the transamidation of misacylated Asp-tRNA(Asn) or Glu-tRNA(Gln) in organisms which lack either or both of asparaginyl-tRNA or glutaminyl-tRNA synthetases. The reaction takes place in the presence of glutamine and ATP through an activated phospho-Asp-tRNA(Asn) or phospho-Glu-tRNA(Gln). The protein is Aspartyl/glutamyl-tRNA(Asn/Gln) amidotransferase subunit C of Dehalococcoides mccartyi (strain ATCC BAA-2266 / KCTC 15142 / 195) (Dehalococcoides ethenogenes (strain 195)).